The following is an 808-amino-acid chain: Copal-8-ol diphosphate hydratase, chloroplastic (808 aa).

A chloroplast-targeting transit peptide spans 1 to 50 (MAFTFTSAHLFLPVTENHSVHVNYSIPPGNWRLWSTAKGGSNKLDIRRLR). Residues 190–219 (DKCQKGLKFFRDNISKLEKENVEASAQMLS) adopt a coiled-coil conformation. K256 is a binding site for substrate. Mg(2+) contacts are provided by D391 and D393. The short motif at 391-394 (DLDD) is the DXDD motif element. K477 is a binding site for substrate.

Belongs to the terpene synthase family. Requires Mg(2+) as cofactor. Expressed in stems, leaves and trichomes. Not detected in roots and seeds. Higher expression in young leaves than in fully expanded leaves.

The protein localises to the plastid. The protein resides in the chloroplast. It catalyses the reaction (2E,6E,10E)-geranylgeranyl diphosphate + H2O = 8-hydroxycopalyl diphosphate. The protein operates within secondary metabolite biosynthesis; terpenoid biosynthesis. Its function is as follows. Involved in the biosynthesis of oxygen-containing labdane-type diterpenes that may be implicated in direct and indirect defense mechanisms. No activity with geranyl diphosphate or farnesyl diphosphate as substrate. The polypeptide is Copal-8-ol diphosphate hydratase, chloroplastic (Cistus creticus subsp. creticus (Rock rose)).